The sequence spans 571 residues: Serine/threonine-protein kinase Nek7 (571 aa).

Residues 19-277 (YHVVEQVRRG…LRNPSLQPYL (259 aa)) form the Protein kinase domain. ATP-binding positions include 25–33 (VRRGKSSSD) and Lys48. Asp144 (proton acceptor) is an active-site residue. Disordered regions lie at residues 298-321 (SPKD…SREK) and 338-363 (TETG…ETKR). Positions 312-321 (FGKERVSREK) are enriched in basic and acidic residues. Residues 342 to 351 (SSSSSQPASS) show a composition bias toward low complexity.

The protein belongs to the protein kinase superfamily. NEK Ser/Thr protein kinase family. NIMA subfamily.

The enzyme catalyses L-seryl-[protein] + ATP = O-phospho-L-seryl-[protein] + ADP + H(+). The catalysed reaction is L-threonyl-[protein] + ATP = O-phospho-L-threonyl-[protein] + ADP + H(+). Its function is as follows. May be involved in plant development processes. The sequence is that of Serine/threonine-protein kinase Nek7 (NEK7) from Arabidopsis thaliana (Mouse-ear cress).